Here is a 498-residue protein sequence, read N- to C-terminus: ATP synthase subunit beta, chloroplastic (498 aa).

172–179 (GGAGVGKT) serves as a coordination point for ATP.

The protein belongs to the ATPase alpha/beta chains family. In terms of assembly, F-type ATPases have 2 components, CF(1) - the catalytic core - and CF(0) - the membrane proton channel. CF(1) has five subunits: alpha(3), beta(3), gamma(1), delta(1), epsilon(1). CF(0) has four main subunits: a(1), b(1), b'(1) and c(9-12).

The protein localises to the plastid. It localises to the chloroplast thylakoid membrane. It carries out the reaction ATP + H2O + 4 H(+)(in) = ADP + phosphate + 5 H(+)(out). Produces ATP from ADP in the presence of a proton gradient across the membrane. The catalytic sites are hosted primarily by the beta subunits. This is ATP synthase subunit beta, chloroplastic from Jasminum nudiflorum (Winter jasmine).